The primary structure comprises 276 residues: Small ribosomal subunit protein uS2 (276 aa).

Belongs to the universal ribosomal protein uS2 family.

The polypeptide is Small ribosomal subunit protein uS2 (Chlamydia caviae (strain ATCC VR-813 / DSM 19441 / 03DC25 / GPIC) (Chlamydophila caviae)).